A 702-amino-acid polypeptide reads, in one-letter code: Ribosomal RNA large subunit methyltransferase K/L (702 aa).

Residues 43 to 154 (LVYQSLMWSR…KETASIALDL (112 aa)) form the THUMP domain.

This sequence belongs to the methyltransferase superfamily. RlmKL family.

The protein resides in the cytoplasm. The catalysed reaction is guanosine(2445) in 23S rRNA + S-adenosyl-L-methionine = N(2)-methylguanosine(2445) in 23S rRNA + S-adenosyl-L-homocysteine + H(+). It carries out the reaction guanosine(2069) in 23S rRNA + S-adenosyl-L-methionine = N(2)-methylguanosine(2069) in 23S rRNA + S-adenosyl-L-homocysteine + H(+). Specifically methylates the guanine in position 2445 (m2G2445) and the guanine in position 2069 (m7G2069) of 23S rRNA. The sequence is that of Ribosomal RNA large subunit methyltransferase K/L from Escherichia coli (strain SMS-3-5 / SECEC).